We begin with the raw amino-acid sequence, 233 residues long: Homeobox protein Hox-D4a (233 aa).

An Antp-type hexapeptide motif is present at residues 124 to 129 (VYPWMK). The segment at residues 145-204 (PKRSRTAYTRQQVLELEKEFHFNRYLTRRRRIEIAHTLCLSERQIKIWFQNRRMKWTKDH) is a DNA-binding region (homeobox). Residues 203-233 (DHKLPNTKGRSAPASSHLQSIHKDQTDITSL) are disordered. A compositionally biased stretch (basic and acidic residues) spans 223-233 (IHKDQTDITSL).

It belongs to the Antp homeobox family. Deformed subfamily.

It is found in the nucleus. Functionally, sequence-specific transcription factor which is part of a developmental regulatory system that provides cells with specific positional identities on the anterior-posterior axis. The sequence is that of Homeobox protein Hox-D4a (hoxd4a) from Takifugu rubripes (Japanese pufferfish).